The primary structure comprises 134 residues: Large ribosomal subunit protein bL20 (134 aa).

Belongs to the bacterial ribosomal protein bL20 family.

Functionally, binds directly to 23S ribosomal RNA and is necessary for the in vitro assembly process of the 50S ribosomal subunit. It is not involved in the protein synthesizing functions of that subunit. In Rhizobium rhizogenes (strain K84 / ATCC BAA-868) (Agrobacterium radiobacter), this protein is Large ribosomal subunit protein bL20.